Reading from the N-terminus, the 171-residue chain is S-ribosylhomocysteine lyase (171 aa).

The Fe cation site is built by histidine 54, histidine 58, and cysteine 128.

It belongs to the LuxS family. As to quaternary structure, homodimer. The cofactor is Fe cation.

The catalysed reaction is S-(5-deoxy-D-ribos-5-yl)-L-homocysteine = (S)-4,5-dihydroxypentane-2,3-dione + L-homocysteine. Its function is as follows. Involved in the synthesis of autoinducer 2 (AI-2) which is secreted by bacteria and is used to communicate both the cell density and the metabolic potential of the environment. The regulation of gene expression in response to changes in cell density is called quorum sensing. Catalyzes the transformation of S-ribosylhomocysteine (RHC) to homocysteine (HC) and 4,5-dihydroxy-2,3-pentadione (DPD). This chain is S-ribosylhomocysteine lyase, found in Salmonella agona (strain SL483).